The following is a 337-amino-acid chain: tRNA N6-adenosine threonylcarbamoyltransferase (337 aa).

His111 and His115 together coordinate Fe cation. Substrate-binding positions include 134–138 (LVSGG), Asp167, Gly180, and Asn272. Position 300 (Asp300) interacts with Fe cation.

Belongs to the KAE1 / TsaD family. Requires Fe(2+) as cofactor.

The protein localises to the cytoplasm. The enzyme catalyses L-threonylcarbamoyladenylate + adenosine(37) in tRNA = N(6)-L-threonylcarbamoyladenosine(37) in tRNA + AMP + H(+). Its function is as follows. Required for the formation of a threonylcarbamoyl group on adenosine at position 37 (t(6)A37) in tRNAs that read codons beginning with adenine. Is involved in the transfer of the threonylcarbamoyl moiety of threonylcarbamoyl-AMP (TC-AMP) to the N6 group of A37, together with TsaE and TsaB. TsaD likely plays a direct catalytic role in this reaction. The polypeptide is tRNA N6-adenosine threonylcarbamoyltransferase (Salmonella newport (strain SL254)).